Consider the following 302-residue polypeptide: MAEVLNLESIISRLLEVRGARPGKNVQLSEGEIRGLCLKSREILLAQPILLELEAPLKICGDIHGQYYDLLRLFEYGGYPPEANYLFLGDYVDRGKQSLETICLLLAYKIKYSENFFLLRGNHECASINRIYGFYDECKRRYTIKLWKTFTDCFNCLPVVAIVDEKIFCCHGGLSPDLTSMEQIRRIMRPTDVPDQGLLCDLLWSDPDKDTIGWGENDRGVSFTFGAEVVVKFLQKHDLDLICRAHQVVEDGYEFFAKRQLVTLFSAPNYCGEFDNAGAMMSVDNTLMCSFQILKPVEKRKK.

Mn(2+)-binding residues include Asp-62, His-64, Asp-90, and Asn-122. The Proton donor role is filled by His-123. Positions 171 and 246 each coordinate Mn(2+).

It belongs to the PPP phosphatase family. PP-1 subfamily. Interacts with Nop17l. Mn(2+) serves as cofactor.

It carries out the reaction O-phospho-L-seryl-[protein] + H2O = L-seryl-[protein] + phosphate. It catalyses the reaction O-phospho-L-threonyl-[protein] + H2O = L-threonyl-[protein] + phosphate. The polypeptide is Serine/threonine-protein phosphatase alpha-3 isoform (Pp1-13C) (Drosophila melanogaster (Fruit fly)).